The following is a 734-amino-acid chain: Diacylglycerol kinase alpha (734 aa).

EF-hand domains are found at residues 109 to 144 (RPEDKLEFTFKLYDTDRNGILDSSEVDRIIIQMMRM) and 154 to 189 (ELRPILQEMMKEIDYDGSGSVSLAEWLRAGATTVPL). 9 residues coordinate Ca(2+): aspartate 122, aspartate 124, asparagine 126, glutamate 133, aspartate 167, aspartate 169, serine 171, serine 173, and glutamate 178. 2 Phorbol-ester/DAG-type zinc fingers span residues 204–252 (QHMW…ALPC) and 268–318 (THVW…GHEC). The interval 358 to 505 (NLSTSEALRI…MDRWSVEVIP (148 aa)) is necessary and sufficient for the diacylglycerol kinase activity. Positions 371–505 (SNTHPLLVFV…MDRWSVEVIP (135 aa)) constitute a DAGKc domain. Lysine 483 bears the N6-acetyllysine mark.

It belongs to the eukaryotic diacylglycerol kinase family. In terms of assembly, monomer.

It is found in the cytoplasm. Its subcellular location is the cytosol. The enzyme catalyses a 1,2-diacyl-sn-glycerol + ATP = a 1,2-diacyl-sn-glycero-3-phosphate + ADP + H(+). It catalyses the reaction a 1-O-alkyl-sn-glycerol + ATP = a 1-O-alkyl-sn-glycero-3-phosphate + ADP + H(+). The catalysed reaction is 1-O-alkyl-2-acyl-sn-glycerol + ATP = 1-O-alkyl-2-acyl-sn-glycero-3-phosphate + ADP + H(+). It carries out the reaction 1,2-dihexadecanoyl-sn-glycerol + ATP = 1,2-dihexadecanoyl-sn-glycero-3-phosphate + ADP + H(+). The enzyme catalyses 1-hexadecanoyl-2-(9Z-octadecenoyl)-sn-glycerol + ATP = 1-hexadecanoyl-2-(9Z-octadecenoyl)-sn-glycero-3-phosphate + ADP + H(+). It catalyses the reaction 2-(9Z-octadecenoyl)-glycerol + ATP = 2-(9Z-octadecenoyl)-sn-glycero-3-phosphate + ADP + H(+). The catalysed reaction is 1,2-di-(9Z-octadecenoyl)-sn-glycerol + ATP = 1,2-di-(9Z-octadecenoyl)-sn-glycero-3-phosphate + ADP + H(+). It carries out the reaction 1-octadecanoyl-2-(5Z,8Z,11Z,14Z-eicosatetraenoyl)-sn-glycerol + ATP = 1-octadecanoyl-2-(5Z,8Z,11Z,14Z-eicosatetraenoyl)-sn-glycero-3-phosphate + ADP + H(+). The enzyme catalyses 1,2-didecanoyl-sn-glycerol + ATP = 1,2-didecanoyl-sn-glycero-3-phosphate + ADP + H(+). It catalyses the reaction 1-O-hexadecyl-2-acetyl-sn-glycerol + ATP = 1-O-hexadecyl-2-acetyl-sn-glycero-3-phosphate + ADP + H(+). The catalysed reaction is 1-O-hexadecyl-2-(5Z,8Z,11Z,14Z-eicosatetraenoyl)-sn-glycerol + ATP = 1-O-hexadecyl-2-(5Z,8Z,11Z,14Z-eicosatetraenoyl)-sn-glycero-3-phosphate + ADP + H(+). It carries out the reaction 1-O-hexadecyl-2-(9Z-octadecenoyl)-sn-glycerol + ATP = 1-O-hexadecyl-2-(9Z-octadecenoyl)-sn-glycero-3-phosphate + ADP + H(+). The enzyme catalyses 1-O-hexadecyl-sn-glycerol + ATP = 1-O-hexadecyl-sn-glycero-3-phosphate + ADP + H(+). It participates in lipid metabolism; glycerolipid metabolism. With respect to regulation, stimulated by calcium and phosphatidylserine. In terms of biological role, diacylglycerol kinase that converts diacylglycerol/DAG into phosphatidic acid/phosphatidate/PA and regulates the respective levels of these two bioactive lipids. Thereby, acts as a central switch between the signaling pathways activated by these second messengers with different cellular targets and opposite effects in numerous biological processes. Also plays an important role in the biosynthesis of complex lipids. Can also phosphorylate 1-alkyl-2-acylglycerol in vitro as efficiently as diacylglycerol provided it contains an arachidonoyl group. Also involved in the production of alkyl-lysophosphatidic acid, another bioactive lipid, through the phosphorylation of 1-alkyl-2-acetyl glycerol. The polypeptide is Diacylglycerol kinase alpha (DGKA) (Sus scrofa (Pig)).